A 147-amino-acid polypeptide reads, in one-letter code: D-aminoacyl-tRNA deacylase (147 aa).

The Gly-cisPro motif, important for rejection of L-amino acids motif lies at 137–138; it reads GP.

Belongs to the DTD family. Homodimer.

It localises to the cytoplasm. The catalysed reaction is glycyl-tRNA(Ala) + H2O = tRNA(Ala) + glycine + H(+). The enzyme catalyses a D-aminoacyl-tRNA + H2O = a tRNA + a D-alpha-amino acid + H(+). Its function is as follows. An aminoacyl-tRNA editing enzyme that deacylates mischarged D-aminoacyl-tRNAs. Also deacylates mischarged glycyl-tRNA(Ala), protecting cells against glycine mischarging by AlaRS. Acts via tRNA-based rather than protein-based catalysis; rejects L-amino acids rather than detecting D-amino acids in the active site. By recycling D-aminoacyl-tRNA to D-amino acids and free tRNA molecules, this enzyme counteracts the toxicity associated with the formation of D-aminoacyl-tRNA entities in vivo and helps enforce protein L-homochirality. This chain is D-aminoacyl-tRNA deacylase, found in Bacillus licheniformis (strain ATCC 14580 / DSM 13 / JCM 2505 / CCUG 7422 / NBRC 12200 / NCIMB 9375 / NCTC 10341 / NRRL NRS-1264 / Gibson 46).